We begin with the raw amino-acid sequence, 353 residues long: Phospho-N-acetylmuramoyl-pentapeptide-transferase (353 aa).

10 helical membrane-spanning segments follow: residues 16 to 36, 64 to 84, 88 to 108, 130 to 150, 160 to 180, 198 to 218, 228 to 248, 256 to 276, 281 to 301, and 330 to 350; these read YISVRAGISFFIAFVLTMYLM, AGTPTMGGVVFIFSTIIATVL, LNNFYIVGGILTLALFSLIGI, LIFQFLCAASIAGILFLYGHS, FPLFEMGVFGIVFWMFVIVGS, SILAFSTLSILVYVVGHAVFA, IAGELAIMGSAICGALIAFLW, VFMGDSGSLPLGAFMGYLAIV, ILLLAIGFIFVWETVSVILQV, and KIIVRFWIIAFMSNLIALLSL.

This sequence belongs to the glycosyltransferase 4 family. MraY subfamily. Mg(2+) serves as cofactor.

Its subcellular location is the cell inner membrane. The catalysed reaction is UDP-N-acetyl-alpha-D-muramoyl-L-alanyl-gamma-D-glutamyl-meso-2,6-diaminopimeloyl-D-alanyl-D-alanine + di-trans,octa-cis-undecaprenyl phosphate = di-trans,octa-cis-undecaprenyl diphospho-N-acetyl-alpha-D-muramoyl-L-alanyl-D-glutamyl-meso-2,6-diaminopimeloyl-D-alanyl-D-alanine + UMP. The protein operates within cell wall biogenesis; peptidoglycan biosynthesis. Its function is as follows. Catalyzes the initial step of the lipid cycle reactions in the biosynthesis of the cell wall peptidoglycan: transfers peptidoglycan precursor phospho-MurNAc-pentapeptide from UDP-MurNAc-pentapeptide onto the lipid carrier undecaprenyl phosphate, yielding undecaprenyl-pyrophosphoryl-MurNAc-pentapeptide, known as lipid I. This Aliarcobacter butzleri (strain RM4018) (Arcobacter butzleri) protein is Phospho-N-acetylmuramoyl-pentapeptide-transferase.